The following is an 806-amino-acid chain: Phenylalanine--tRNA ligase beta subunit (806 aa).

The tRNA-binding domain maps to 44–158; the sequence is ADGLSKLVVG…EEAVPGDAIF (115 aa). The B5 domain occupies 411–486; the sequence is TEPVEVSTSL…RIYGYDKLPT (76 aa). The Mg(2+) site is built by Asp464, Asp470, Glu473, and Glu474. An FDX-ACB domain is found at 713–806; that stretch reads TKFPAMTRDV…LTEQVGAEVR (94 aa).

Belongs to the phenylalanyl-tRNA synthetase beta subunit family. Type 1 subfamily. Tetramer of two alpha and two beta subunits. Mg(2+) serves as cofactor.

It is found in the cytoplasm. The catalysed reaction is tRNA(Phe) + L-phenylalanine + ATP = L-phenylalanyl-tRNA(Phe) + AMP + diphosphate + H(+). The sequence is that of Phenylalanine--tRNA ligase beta subunit from Streptococcus pyogenes serotype M28 (strain MGAS6180).